Reading from the N-terminus, the 100-residue chain is uncharacterized protein (100 aa).

Transmembrane regions (helical) follow at residues 11–33 (VWSI…SVLM), 45–64 (WMLA…SLVY), and 68–90 (WEGA…GYLI).

It localises to the cell membrane. This is an uncharacterized protein from Bacillus subtilis (strain 168).